The sequence spans 155 residues: Small ribosomal subunit protein uS7 (155 aa).

Belongs to the universal ribosomal protein uS7 family. Part of the 30S ribosomal subunit. Contacts proteins S9 and S11.

Functionally, one of the primary rRNA binding proteins, it binds directly to 16S rRNA where it nucleates assembly of the head domain of the 30S subunit. Is located at the subunit interface close to the decoding center, probably blocks exit of the E-site tRNA. The protein is Small ribosomal subunit protein uS7 of Lactococcus lactis subsp. lactis (strain IL1403) (Streptococcus lactis).